A 61-amino-acid polypeptide reads, in one-letter code: Photosystem II reaction center protein K (61 aa).

Residues 1-24 (MLNILNLICICLNFALYSSSFFFT) constitute a propeptide that is removed on maturation. The helical transmembrane segment at 40 to 60 (MPVIPLFFFLLAFVWQAAVSF) threads the bilayer.

Belongs to the PsbK family. In terms of assembly, PSII is composed of 1 copy each of membrane proteins PsbA, PsbB, PsbC, PsbD, PsbE, PsbF, PsbH, PsbI, PsbJ, PsbK, PsbL, PsbM, PsbT, PsbX, PsbY, PsbZ, Psb30/Ycf12, at least 3 peripheral proteins of the oxygen-evolving complex and a large number of cofactors. It forms dimeric complexes.

The protein resides in the plastid. The protein localises to the chloroplast thylakoid membrane. Functionally, one of the components of the core complex of photosystem II (PSII). PSII is a light-driven water:plastoquinone oxidoreductase that uses light energy to abstract electrons from H(2)O, generating O(2) and a proton gradient subsequently used for ATP formation. It consists of a core antenna complex that captures photons, and an electron transfer chain that converts photonic excitation into a charge separation. The sequence is that of Photosystem II reaction center protein K from Populus alba (White poplar).